Consider the following 521-residue polypeptide: uncharacterized protein (521 aa).

The tract at residues Met-1–Lys-25 is disordered. The next 6 membrane-spanning stretches (helical) occupy residues Gly-68–Leu-88, Val-114–Val-134, Val-160–Gly-180, Val-192–Leu-212, Ala-290–Trp-310, and Leu-399–Ile-419.

The protein resides in the cell membrane. This is an uncharacterized protein from Mycobacterium bovis (strain ATCC BAA-935 / AF2122/97).